A 184-amino-acid polypeptide reads, in one-letter code: Probable RNA 2'-phosphotransferase (184 aa).

It belongs to the KptA/TPT1 family.

Removes the 2'-phosphate from RNA via an intermediate in which the phosphate is ADP-ribosylated by NAD followed by a presumed transesterification to release the RNA and generate ADP-ribose 1''-2''-cyclic phosphate (APPR&gt;P). May function as an ADP-ribosylase. The chain is Probable RNA 2'-phosphotransferase from Escherichia coli O8 (strain IAI1).